Consider the following 55-residue polypeptide: Large ribosomal subunit protein bL33 (55 aa).

It belongs to the bacterial ribosomal protein bL33 family.

This chain is Large ribosomal subunit protein bL33, found in Rhodopseudomonas palustris (strain BisB5).